A 428-amino-acid chain; its full sequence is Elongation factor 1-alpha (428 aa).

In terms of domain architecture, tr-type G spans 5-215; it reads KPHVNIVFIG…ALDQIPEPPK (211 aa). The tract at residues 14 to 21 is G1; the sequence is GHVDHGKS. A GTP-binding site is contributed by 14-21; the sequence is GHVDHGKS. Serine 21 is a Mg(2+) binding site. A G2 region spans residues 68–72; it reads GITID. Residues 89-92 are G3; the sequence is DAPG. Residues 89 to 93 and 144 to 147 each bind GTP; these read DAPGH and NKMD. Positions 144–147 are G4; it reads NKMD. Residues 181 to 183 form a G5 region; sequence SAW.

The protein belongs to the TRAFAC class translation factor GTPase superfamily. Classic translation factor GTPase family. EF-Tu/EF-1A subfamily.

The protein resides in the cytoplasm. The enzyme catalyses GTP + H2O = GDP + phosphate + H(+). In terms of biological role, GTP hydrolase that promotes the GTP-dependent binding of aminoacyl-tRNA to the A-site of ribosomes during protein biosynthesis. In Thermococcus kodakarensis (strain ATCC BAA-918 / JCM 12380 / KOD1) (Pyrococcus kodakaraensis (strain KOD1)), this protein is Elongation factor 1-alpha.